The following is an 857-amino-acid chain: Putative serine/threonine-protein kinase receptor (857 aa).

The signal sequence occupies residues 1-32; the sequence is MKGARNIYHHSYMSFLLVFVVMILIHPALSIY. At 33-446 the chain is on the extracellular side; sequence INTLSSTESL…IAKKRNASGK (414 aa). Residues 35-155 form the Bulb-type lectin domain; the sequence is TLSSTESLTI…SNNDASEYLW (121 aa). Asparagine 47, asparagine 120, asparagine 196, asparagine 260, asparagine 389, and asparagine 442 each carry an N-linked (GlcNAc...) asparagine glycan. The 84-residue stretch at 350-433 folds into the PAN domain; sequence CSGDGFTRMK…DGQDLYVRLA (84 aa). 2 disulfide bridges follow: cysteine 380–cysteine 405 and cysteine 388–cysteine 390. A helical membrane pass occupies residues 447–466; it reads IISLTVGVSVLLLLIMFCLW. Residues 467–857 lie on the Cytoplasmic side of the membrane; sequence KRKQKRAKAS…QYTCSVIDAR (391 aa). One can recognise a Protein kinase domain in the interval 528-779; that stretch reads FSSCNKLGQG…PSIFQPQEVL (252 aa). ATP-binding positions include 534–542 and lysine 556; that span reads LGQGGFGIV. The Proton acceptor role is filled by aspartate 653.

It belongs to the protein kinase superfamily. Ser/Thr protein kinase family. Predominantly in the pistil and anther.

The protein resides in the membrane. The catalysed reaction is L-seryl-[protein] + ATP = O-phospho-L-seryl-[protein] + ADP + H(+). The enzyme catalyses L-threonyl-[protein] + ATP = O-phospho-L-threonyl-[protein] + ADP + H(+). Functionally, involved in sporophytic self-incompatibility system (the inability of flowering plants to achieve self-fertilization), probably acting in combination with S-locus-specific glycoproteins. Interaction with a ligand in the extracellular domain triggers the protein kinase activity of the cytoplasmic domain. This Brassica oleracea var. viridis (Flowering kale) protein is Putative serine/threonine-protein kinase receptor (SRK6).